We begin with the raw amino-acid sequence, 496 residues long: UDP-glycosyltransferase 73C3 (496 aa).

Residues serine 297, 357-359 (APQ), 374-382 (HCGWNSTLE), and 396-399 (FGDQ) contribute to the UDP-alpha-D-glucose site.

The protein belongs to the UDP-glycosyltransferase family.

The sequence is that of UDP-glycosyltransferase 73C3 (UGT73C3) from Arabidopsis thaliana (Mouse-ear cress).